The following is a 1411-amino-acid chain: Nuclear pore complex protein Nup160 homolog (1411 aa).

Part of the nuclear pore complex. Interacts with Nup98.

Its subcellular location is the nucleus. It localises to the nuclear pore complex. In terms of biological role, functions as a component of the nuclear pore complex (NPC). Involved in poly(A)+ RNA transport. Required for nuclear import of Mad. May play a role in double strand break DNA repair. Essential for nephrocyte development. The polypeptide is Nuclear pore complex protein Nup160 homolog (Nup160) (Drosophila melanogaster (Fruit fly)).